The sequence spans 112 residues: Putative pterin-4-alpha-carbinolamine dehydratase (112 aa).

Belongs to the pterin-4-alpha-carbinolamine dehydratase family.

The catalysed reaction is (4aS,6R)-4a-hydroxy-L-erythro-5,6,7,8-tetrahydrobiopterin = (6R)-L-erythro-6,7-dihydrobiopterin + H2O. This chain is Putative pterin-4-alpha-carbinolamine dehydratase, found in Shewanella oneidensis (strain ATCC 700550 / JCM 31522 / CIP 106686 / LMG 19005 / NCIMB 14063 / MR-1).